The chain runs to 128 residues: Cytochrome b (128 aa).

Transmembrane regions (helical) follow at residues 25–45 (FGSM…FLAI), 69–90 (WIMQ…YIHI), and 105–125 (WLSG…XMCY). Positions 75 and 89 each coordinate heme b. His126 is an a ubiquinone binding site.

This sequence belongs to the cytochrome b family. As to quaternary structure, the cytochrome bc1 complex contains 3 respiratory subunits (MT-CYB, CYC1 and UQCRFS1), 2 core proteins (UQCRC1 and UQCRC2) and probably 6 low-molecular weight proteins. Heme b is required as a cofactor.

The protein localises to the mitochondrion inner membrane. Component of the ubiquinol-cytochrome c reductase complex (complex III or cytochrome b-c1 complex) that is part of the mitochondrial respiratory chain. The b-c1 complex mediates electron transfer from ubiquinol to cytochrome c. Contributes to the generation of a proton gradient across the mitochondrial membrane that is then used for ATP synthesis. The chain is Cytochrome b (MT-CYB) from Crotalus viridis viridis (Prairie rattlesnake).